Reading from the N-terminus, the 392-residue chain is tRNA (guanine-N(7)-)-methyltransferase (392 aa).

Residues E123, E148, and D175 each coordinate S-adenosyl-L-methionine. Residues K201 and D231 each coordinate substrate.

Belongs to the class I-like SAM-binding methyltransferase superfamily. TrmB family.

The catalysed reaction is guanosine(46) in tRNA + S-adenosyl-L-methionine = N(7)-methylguanosine(46) in tRNA + S-adenosyl-L-homocysteine. It participates in tRNA modification; N(7)-methylguanine-tRNA biosynthesis. Its function is as follows. Catalyzes the formation of N(7)-methylguanine at position 46 (m7G46) in tRNA. This is tRNA (guanine-N(7)-)-methyltransferase from Campylobacter jejuni (strain RM1221).